Here is a 271-residue protein sequence, read N- to C-terminus: MSSPLAPVGIFDSGVGGLTVARAIIDQLPDEDIVYVGDTGNGPYGPLTIPEVRAHALAIGDDLVGRGVKALVIACNTASAACLRDARERYDVPVVEVILPAVRRAVATTRNGRIGVIGTRATITSHAYQDAFAAARDTEITAVACPRFVDFVERGVTSGRQVLGLAEGYLEPLQRSGVDTLVLGCTHYPLLSGLIQLVMGDNVTLVSSAEETAKEVLRVLTERDILRPHDAPPATRLFEATGDPEAFMALAARFLGPALTGVQPVRPSGMH.

Residues 12–13 (DS) and 44–45 (YG) each bind substrate. Catalysis depends on C75, which acts as the Proton donor/acceptor. 76-77 (NT) is a binding site for substrate. Catalysis depends on C185, which acts as the Proton donor/acceptor. 186-187 (TH) is a substrate binding site.

It belongs to the aspartate/glutamate racemases family.

It carries out the reaction L-glutamate = D-glutamate. The protein operates within cell wall biogenesis; peptidoglycan biosynthesis. Provides the (R)-glutamate required for cell wall biosynthesis. This is Glutamate racemase from Mycobacterium marinum (strain ATCC BAA-535 / M).